Consider the following 231-residue polypeptide: Tegument protein UL51 homolog (231 aa).

A lipid anchor (S-palmitoyl cysteine; by host) is attached at Cys-12.

The protein belongs to the herpesviridae UL51 family. In terms of assembly, oligomerizes. Interacts with U75; this interaction mediates U75 incorporation to virions. Post-translationally, phosphorylated. In terms of processing, palmitoylation is necessary for Golgi localization.

Its subcellular location is the virion tegument. It localises to the host cytoplasm. The protein resides in the host Golgi apparatus. In terms of biological role, plays several roles during the time course of infection, including egress of virus particles from the perinuclear space and secondary envelopment of cytoplasmic capsids that bud into specific trans-Golgi network (TGN)-derived membranes. This is Tegument protein UL51 homolog (U44) from Human herpesvirus 6B (strain Z29) (HHV-6 variant B).